A 232-amino-acid chain; its full sequence is Small ribosomal subunit protein uS2 (232 aa).

Belongs to the universal ribosomal protein uS2 family.

The polypeptide is Small ribosomal subunit protein uS2 (Alkaliphilus oremlandii (strain OhILAs) (Clostridium oremlandii (strain OhILAs))).